Here is a 312-residue protein sequence, read N- to C-terminus: D-alanine--D-alanine ligase (312 aa).

The ATP-grasp domain maps to 99–304 (KKILKAEGIP…FEDLVEKILM (206 aa)). 131-186 (LQTLKLPVVIKAPREGSTIGIEFVFSKQELPKAIKKVLEIDKQLLVEEFIEGVEVT) serves as a coordination point for ATP. The Mg(2+) site is built by D257, E271, and N273.

It belongs to the D-alanine--D-alanine ligase family. It depends on Mg(2+) as a cofactor. Mn(2+) serves as cofactor.

Its subcellular location is the cytoplasm. The catalysed reaction is 2 D-alanine + ATP = D-alanyl-D-alanine + ADP + phosphate + H(+). The protein operates within cell wall biogenesis; peptidoglycan biosynthesis. Its function is as follows. Cell wall formation. The polypeptide is D-alanine--D-alanine ligase (Carboxydothermus hydrogenoformans (strain ATCC BAA-161 / DSM 6008 / Z-2901)).